The primary structure comprises 251 residues: uncharacterized protein (251 aa).

The tract at residues 229–251 (TSTETSPEHQADLKDDNSDISST) is disordered. Over residues 234–245 (SPEHQADLKDDN) the composition is skewed to basic and acidic residues.

This is an uncharacterized protein from Acanthamoeba polyphaga (Amoeba).